The primary structure comprises 537 residues: Lysosomal cobalamin transport escort protein LMBD1 (537 aa).

Topologically, residues 1–7 are extracellular; sequence MAAAAAE. A helical transmembrane segment spans residues 8–28; the sequence is LVIGWCIFGLLLLAILAFCWV. Residues 29-47 are Cytoplasmic-facing; it reads YVRKYQSQRESEVVSTVTA. Residues 48 to 68 form a helical membrane-spanning segment; sequence IFSLAVALITSALLPVDIFLV. Residues 69–97 are Extracellular-facing; that stretch reads SYMKNQNGTFKDWADANVTVQIENTVLYG. N-linked (GlcNAc...) asparagine glycans are attached at residues Asn-75 and Asn-85. The helical transmembrane segment at 98–118 threads the bilayer; that stretch reads YYTLYSVILFCVFFWIPFVYF. Residues 119-141 lie on the Cytoplasmic side of the membrane; the sequence is YYEEKDEDDASKCTQIKTALKYT. The chain crosses the membrane as a helical span at residues 142–162; sequence LGFVVICALLLLVGAFVPLHL. Residues 163 to 185 lie on the Extracellular side of the membrane; sequence PNNNNSTEWEKVKLLFEDLGTGQ. Asn-166 and Asn-167 each carry an N-linked (GlcNAc...) asparagine glycan. The helical transmembrane segment at 186–206 threads the bilayer; it reads GLAALSFSISSLTLIGMLAAI. Residues 207-302 lie on the Cytoplasmic side of the membrane; that stretch reads TYTAYGMSAL…KFCGALRPLK (96 aa). A YERL motif; mediates interaction with adapter protein complex 2 and is essential for its function in clathrin-mediated endocytosis of INSR motif is present at residues 229 to 232; sequence YERL. Thr-235 carries the post-translational modification Phosphothreonine. The WTKF motif; mediates interaction with adapter protein complex 2 and is essential for its function in clathrin-mediated endocytosis of INSR signature appears at 291–294; that stretch reads WTKF. Residues 303 to 323 traverse the membrane as a helical segment; it reads IIWGIFFILVALLFVISLFLS. Topologically, residues 324 to 361 are extracellular; sequence NLDKALHSAGIDSGFIIFGTNLSNPLNMLLPLLQTVFP. N-linked (GlcNAc...) asparagine glycosylation occurs at Asn-344. The helical transmembrane segment at 362 to 382 threads the bilayer; the sequence is LDYILITIIIMYFIFTSMAGI. The Cytoplasmic segment spans residues 383 to 405; it reads RNIGIWFFWIRLYKIRRGRTRPQ. A helical membrane pass occupies residues 406-426; the sequence is ALLFLCMILLLIVLHTSYMIY. At 427–483 the chain is on the extracellular side; sequence SLAPQYVMYGSQNYLIESNITSDAHKGNSTLAVPKRCDADAPKDQCTVTRTYIFLHK. 2 N-linked (GlcNAc...) asparagine glycosylation sites follow: Asn-445 and Asn-454. The chain crosses the membrane as a helical span at residues 484 to 504; the sequence is FWFFSAAYYFGNWAFLVVFLI. Residues 505–537 lie on the Cytoplasmic side of the membrane; sequence GLIVSCCKGKKSVIEGVDEDSDLSDDEPSAYSA. Residues Ser-525 and Ser-528 each carry the phosphoserine modification.

This sequence belongs to the LIMR family. LMBRD1 subfamily. In terms of assembly, interacts with ABCD4; this interaction induces the translocation of ABCD4 from the endoplasmic reticulum to the lysosome. Interacts with ABCD4 and MMACHC; this interaction ensures the transport of cobalamin from the lysosome to the cytoplasm. Interacts with INSR, adapter protein complex 2 and clathrin heavy chain. N-glycosylated.

Its subcellular location is the endoplasmic reticulum membrane. The protein resides in the lysosome membrane. The protein localises to the cell membrane. It localises to the cytoplasmic vesicle. It is found in the clathrin-coated vesicle. In terms of biological role, lysosomal membrane chaperone required to export cobalamin (vitamin B12) from the lysosome to the cytosol, allowing its conversion to cofactors. Targets ABCD4 transporter from the endoplasmic reticulum to the lysosome. Then forms a complex with lysosomal ABCD4 and cytoplasmic MMACHC to transport cobalamin across the lysosomal membrane. Acts as an adapter protein which plays an important role in mediating and regulating the internalization of the insulin receptor (INSR). Involved in clathrin-mediated endocytosis of INSR via its interaction with adapter protein complex 2. Essential for the initiation of gastrulation and early formation of mesoderm structures during embryogenesis. The sequence is that of Lysosomal cobalamin transport escort protein LMBD1 from Mus musculus (Mouse).